The following is a 160-amino-acid chain: Protransforming growth factor alpha (160 aa).

The N-terminal stretch at 1-23 is a signal peptide; sequence MVPSAGQLALFALGIVLAACQAL. Residues 24 to 39 constitute a propeptide, removed in mature form; the sequence is ENSTSPLSADPPVAAA. Over 24–98 the chain is Extracellular; the sequence is ENSTSPLSAD…AVVAASQKKQ (75 aa). N-linked (GlcNAc...) asparagine glycosylation is present at N25. In terms of domain architecture, EGF-like spans 43–83; sequence HFNDCPDSHTQFCFHGTCRFLVQEDKPACVCHSGYVGARCE. 3 cysteine pairs are disulfide-bonded: C47/C60, C55/C71, and C73/C82. The propeptide at 90–160 is removed in mature form; the sequence is VVAASQKKQA…TACCHSETVV (71 aa). A helical transmembrane segment spans residues 99–124; that stretch reads AITALVVVSIVALAVLIITCVLIHCC. Residues 125 to 160 lie on the Cytoplasmic side of the membrane; sequence QVRKHCEWCRALICRHEKPSALLKGRTACCHSETVV. S-palmitoyl cysteine attachment occurs at residues C153 and C154.

In terms of assembly, interacts with the PDZ domains of MAGI3, SDCBP and SNTA1. The interaction with SDCBP, is required for the targeting to the cell surface. In the endoplasmic reticulum, in its immature form (i.e. with a prosegment and lacking full N-glycosylation), interacts with CNIH. In the Golgi apparatus, may form a complex with CNIH and GORASP2. Interacts (via cytoplasmic C-terminal domain) with NKD2. As to expression, isoform 1, isoform 3 and isoform 4 are expressed in keratinocytes and tumor-derived cell lines.

The protein resides in the secreted. The protein localises to the extracellular space. It is found in the cell membrane. TGF alpha is a mitogenic polypeptide that is able to bind to the EGF receptor/EGFR and to act synergistically with TGF beta to promote anchorage-independent cell proliferation in soft agar. In Homo sapiens (Human), this protein is Protransforming growth factor alpha (TGFA).